The sequence spans 460 residues: UDP-N-acetylmuramoylalanine--D-glutamate ligase (460 aa).

122–128 (GSNGKST) is a binding site for ATP.

The protein belongs to the MurCDEF family.

It localises to the cytoplasm. It carries out the reaction UDP-N-acetyl-alpha-D-muramoyl-L-alanine + D-glutamate + ATP = UDP-N-acetyl-alpha-D-muramoyl-L-alanyl-D-glutamate + ADP + phosphate + H(+). Its pathway is cell wall biogenesis; peptidoglycan biosynthesis. Its function is as follows. Cell wall formation. Catalyzes the addition of glutamate to the nucleotide precursor UDP-N-acetylmuramoyl-L-alanine (UMA). This chain is UDP-N-acetylmuramoylalanine--D-glutamate ligase, found in Jannaschia sp. (strain CCS1).